The sequence spans 258 residues: Imidazole glycerol phosphate synthase subunit HisF (258 aa).

Active-site residues include aspartate 11 and aspartate 130.

The protein belongs to the HisA/HisF family. Heterodimer of HisH and HisF.

Its subcellular location is the cytoplasm. The catalysed reaction is 5-[(5-phospho-1-deoxy-D-ribulos-1-ylimino)methylamino]-1-(5-phospho-beta-D-ribosyl)imidazole-4-carboxamide + L-glutamine = D-erythro-1-(imidazol-4-yl)glycerol 3-phosphate + 5-amino-1-(5-phospho-beta-D-ribosyl)imidazole-4-carboxamide + L-glutamate + H(+). The protein operates within amino-acid biosynthesis; L-histidine biosynthesis; L-histidine from 5-phospho-alpha-D-ribose 1-diphosphate: step 5/9. In terms of biological role, IGPS catalyzes the conversion of PRFAR and glutamine to IGP, AICAR and glutamate. The HisF subunit catalyzes the cyclization activity that produces IGP and AICAR from PRFAR using the ammonia provided by the HisH subunit. The polypeptide is Imidazole glycerol phosphate synthase subunit HisF (Escherichia coli O1:K1 / APEC).